The primary structure comprises 170 residues: Zinc finger A20 and AN1 domain-containing stress-associated protein 6 (170 aa).

The A20-type zinc-finger motif lies at 10–44; the sequence is PESNRLCVNNCGFLGSSATMNLCSNCYGDLCLKQQ. 4 residues coordinate Zn(2+): cysteine 16, cysteine 20, cysteine 32, and cysteine 35. A disordered region spans residues 53 to 76; it reads TVESSLSVSPPSSSSSEISSPIIP. The segment at 105 to 151 adopts an AN1-type zinc-finger fold; that stretch reads QQRPNRCTTCRKRVGLTGFKCRCGTMFCGVHRYPEIHGCSYDFKSAG. The Zn(2+) site is built by cysteine 111, cysteine 114, cysteine 125, cysteine 127, cysteine 132, histidine 135, histidine 141, and cysteine 143.

Functionally, may be involved in environmental stress response. This chain is Zinc finger A20 and AN1 domain-containing stress-associated protein 6 (SAP6), found in Arabidopsis thaliana (Mouse-ear cress).